A 78-amino-acid chain; its full sequence is Transmembrane protein 258 (78 aa).

At 1 to 18 (MDVMQRYVSPVNPAVFPH) the chain is on the cytoplasmic side. A helical transmembrane segment spans residues 19-39 (LATVLLVIGTFFTAWFFIFVV). At 40–53 (SRKSSKESTLIKEL) the chain is on the cytoplasmic side. Residues 54-74 (LISLCASIFLGFGIVFLLLTV) form a helical membrane-spanning segment. Residues 75–78 (GIYV) lie on the Perinuclear space side of the membrane.

The protein belongs to the OST5 family. Homodimer. Component of the oligosaccharyltransferase (OST) complex. Interacts with klar and Msp300, components of LINC complex.

The protein resides in the nucleus outer membrane. The protein localises to the cytoplasm. It localises to the endoplasmic reticulum membrane. In terms of biological role, subunit of the oligosaccharyl transferase (OST) complex that catalyzes the initial transfer of a defined glycan (Glc(3)Man(9)GlcNAc(2) in eukaryotes) from the lipid carrier dolichol-pyrophosphate to an asparagine residue within an Asn-X-Ser/Thr consensus motif in nascent polypeptide chains, the first step in protein N-glycosylation. N-glycosylation occurs cotranslationally and the complex associates with the Sec61 complex at the channel-forming translocon complex that mediates protein translocation across the endoplasmic reticulum (ER). All subunits are required for a maximal enzyme activity. In addition may regulates nuclear envelope (NE) architecture and nuclear positioning through the linker of nucleoskeleton and cytoskeleton (LINC)-dependent and -independent mechanisms. The chain is Transmembrane protein 258 from Drosophila melanogaster (Fruit fly).